Consider the following 337-residue polypeptide: Fructose-1,6-bisphosphatase class 1 (337 aa).

Mg(2+) contacts are provided by glutamate 92, aspartate 114, leucine 116, and aspartate 117. Substrate contacts are provided by residues aspartate 117–serine 120, asparagine 209, and lysine 275. Glutamate 281 lines the Mg(2+) pocket.

This sequence belongs to the FBPase class 1 family. Homotetramer. It depends on Mg(2+) as a cofactor.

The protein localises to the cytoplasm. It carries out the reaction beta-D-fructose 1,6-bisphosphate + H2O = beta-D-fructose 6-phosphate + phosphate. Its pathway is carbohydrate biosynthesis; gluconeogenesis. The sequence is that of Fructose-1,6-bisphosphatase class 1 from Thiobacillus denitrificans (strain ATCC 25259 / T1).